Reading from the N-terminus, the 400-residue chain is uncharacterized protein (400 aa).

Residues 1 to 31 form the signal peptide; it reads MENPIKPVATRSIGIAVVLLVVGIVIGFAVG.

Belongs to the bacterial solute-binding protein 1 family. WtpA subfamily.

This is an uncharacterized protein from Thermoplasma acidophilum (strain ATCC 25905 / DSM 1728 / JCM 9062 / NBRC 15155 / AMRC-C165).